Reading from the N-terminus, the 213-residue chain is Probable thiopurine S-methyltransferase (213 aa).

Residues Trp-10, Leu-45, Glu-66, and Arg-125 each coordinate S-adenosyl-L-methionine.

It belongs to the class I-like SAM-binding methyltransferase superfamily. TPMT family.

It is found in the cytoplasm. It carries out the reaction S-adenosyl-L-methionine + a thiopurine = S-adenosyl-L-homocysteine + a thiopurine S-methylether.. This Yarrowia lipolytica (strain CLIB 122 / E 150) (Yeast) protein is Probable thiopurine S-methyltransferase.